Consider the following 122-residue polypeptide: Large ribosomal subunit protein uL14 (122 aa).

It belongs to the universal ribosomal protein uL14 family. In terms of assembly, part of the 50S ribosomal subunit. Forms a cluster with proteins L3 and L19. In the 70S ribosome, L14 and L19 interact and together make contacts with the 16S rRNA in bridges B5 and B8.

Functionally, binds to 23S rRNA. Forms part of two intersubunit bridges in the 70S ribosome. This is Large ribosomal subunit protein uL14 from Elusimicrobium minutum (strain Pei191).